A 337-amino-acid chain; its full sequence is Methylthioribose-1-phosphate isomerase (337 aa).

Residues 47-49 (RGA), arginine 81, and glutamine 184 each bind substrate. Aspartate 225 serves as the catalytic Proton donor. Residue 235-236 (NK) coordinates substrate.

The protein belongs to the eIF-2B alpha/beta/delta subunits family. MtnA subfamily.

It catalyses the reaction 5-(methylsulfanyl)-alpha-D-ribose 1-phosphate = 5-(methylsulfanyl)-D-ribulose 1-phosphate. It functions in the pathway amino-acid biosynthesis; L-methionine biosynthesis via salvage pathway; L-methionine from S-methyl-5-thio-alpha-D-ribose 1-phosphate: step 1/6. In terms of biological role, catalyzes the interconversion of methylthioribose-1-phosphate (MTR-1-P) into methylthioribulose-1-phosphate (MTRu-1-P). This is Methylthioribose-1-phosphate isomerase from Parasynechococcus marenigrum (strain WH8102).